Here is a 378-residue protein sequence, read N- to C-terminus: Phospho-N-acetylmuramoyl-pentapeptide-transferase (378 aa).

11 helical membrane-spanning segments follow: residues 26–46, 57–77, 103–123, 127–147, 171–191, 195–215, 225–245, 247–267, 275–295, 302–322, and 356–376; these read LFRL…TGAN, LPWL…VPLL, MGGI…TGFA, LSPT…IGWW, GIGA…ATVV, WGWV…VPMA, GLDG…GIIL, PYPD…GFLW, VFMG…IGLA, LLIV…QVLY, and IVRT…LLQW.

The protein belongs to the glycosyltransferase 4 family. MraY subfamily. The cofactor is Mg(2+).

It is found in the cell inner membrane. The enzyme catalyses UDP-N-acetyl-alpha-D-muramoyl-L-alanyl-gamma-D-glutamyl-meso-2,6-diaminopimeloyl-D-alanyl-D-alanine + di-trans,octa-cis-undecaprenyl phosphate = di-trans,octa-cis-undecaprenyl diphospho-N-acetyl-alpha-D-muramoyl-L-alanyl-D-glutamyl-meso-2,6-diaminopimeloyl-D-alanyl-D-alanine + UMP. It participates in cell wall biogenesis; peptidoglycan biosynthesis. Its function is as follows. Catalyzes the initial step of the lipid cycle reactions in the biosynthesis of the cell wall peptidoglycan: transfers peptidoglycan precursor phospho-MurNAc-pentapeptide from UDP-MurNAc-pentapeptide onto the lipid carrier undecaprenyl phosphate, yielding undecaprenyl-pyrophosphoryl-MurNAc-pentapeptide, known as lipid I. The chain is Phospho-N-acetylmuramoyl-pentapeptide-transferase from Thermosynechococcus vestitus (strain NIES-2133 / IAM M-273 / BP-1).